Consider the following 52-residue polypeptide: QICTNCCAGRKGCSYFSEDGTFICKGESNPENPKACPRNCDGRIAYGICPLS.

A Pyrrolidone carboxylic acid modification is found at Q1. Disulfide bonds link C3–C40, C6–C24, C7–C36, and C13–C49.

It belongs to the protease inhibitor I20 (potato type II proteinase inhibitor) family.

The protein localises to the secreted. The sequence is that of Proteinase inhibitor from Solanum melongena (Eggplant).